The sequence spans 469 residues: Coumaroyl-CoA:anthocyanidin 3-O-glucoside-6''-O-coumaroyltransferase 1 (469 aa).

M1 is subject to N-acetylmethionine. Residues H173 and D410 each act as proton acceptor in the active site.

Belongs to the plant acyltransferase family. As to expression, highly expressed in flowers, leaves and roots. Lower levels of expression in stems and siliques.

In terms of biological role, involved in the acylation of the 6'' position of the 3-O-glucose residue of anthocyanin. Also able to use flavonol 3-glucosides as the acyl acceptor. In Arabidopsis thaliana (Mouse-ear cress), this protein is Coumaroyl-CoA:anthocyanidin 3-O-glucoside-6''-O-coumaroyltransferase 1 (3AT1).